Reading from the N-terminus, the 364-residue chain is GDSL esterase/lipase 7 (364 aa).

Residues 1 to 19 (MKSLLICLVLLELVWLGNG) form the signal peptide. Catalysis depends on Ser-37, which acts as the Nucleophile. N-linked (GlcNAc...) asparagine glycans are attached at residues Asn-236, Asn-237, and Asn-264. Catalysis depends on residues Asp-329 and His-332. A glycan (N-linked (GlcNAc...) asparagine) is linked at Asn-351.

This sequence belongs to the 'GDSL' lipolytic enzyme family.

It is found in the secreted. The sequence is that of GDSL esterase/lipase 7 (GLIP7) from Arabidopsis thaliana (Mouse-ear cress).